Here is a 328-residue protein sequence, read N- to C-terminus: UPF0421 protein SAR1980 (328 aa).

Transmembrane regions (helical) follow at residues 19-39 (IAIF…IYAI), 61-81 (LPAT…FGDQ), 108-128 (VAVL…IFNF), and 132-152 (TLTA…VFPP).

It belongs to the UPF0421 family.

It localises to the cell membrane. The polypeptide is UPF0421 protein SAR1980 (Staphylococcus aureus (strain MRSA252)).